The sequence spans 274 residues: Mitochondrial outer membrane protein porin 1 (274 aa).

The protein belongs to the eukaryotic mitochondrial porin (TC 1.B.8.1) family. Expressed in shoots and roots. Also expressed in callus, leaves, panicles, sheaths and stems.

Its subcellular location is the mitochondrion outer membrane. Forms a channel through the mitochondrial outer membrane that allows diffusion of small hydrophilic molecules. The channel adopts an open conformation at low or zero membrane potential and a closed conformation at potentials above 30-40 mV. The open state has a weak anion selectivity whereas the closed state is cation-selective. This Oryza sativa subsp. japonica (Rice) protein is Mitochondrial outer membrane protein porin 1 (VDAC1).